A 217-amino-acid polypeptide reads, in one-letter code: Peptide methionine sulfoxide reductase MsrA (217 aa).

C56 is an active-site residue.

It belongs to the MsrA Met sulfoxide reductase family.

It catalyses the reaction L-methionyl-[protein] + [thioredoxin]-disulfide + H2O = L-methionyl-(S)-S-oxide-[protein] + [thioredoxin]-dithiol. The catalysed reaction is [thioredoxin]-disulfide + L-methionine + H2O = L-methionine (S)-S-oxide + [thioredoxin]-dithiol. In terms of biological role, has an important function as a repair enzyme for proteins that have been inactivated by oxidation. Catalyzes the reversible oxidation-reduction of methionine sulfoxide in proteins to methionine. The polypeptide is Peptide methionine sulfoxide reductase MsrA (Corynebacterium glutamicum (strain R)).